Consider the following 502-residue polypeptide: Alpha-ketoglutarate-dependent dioxygenase FTO (502 aa).

The fe2OG dioxygenase domain stretch occupies residues threonine 32 to serine 324. 2 residues coordinate substrate: arginine 96 and tyrosine 108. Asparagine 202 serves as a coordination point for 2-oxoglutarate. The segment at proline 210–glycine 221 is loop L1; predicted to block binding of double-stranded DNA or RNA. At lysine 213 the chain carries N6-acetyllysine. Positions 228 and 230 each coordinate Fe cation. A substrate-binding site is contributed by histidine 228 to glutamate 231. Position 292 (tyrosine 292) interacts with 2-oxoglutarate. Position 304 (histidine 304) interacts with Fe cation. 2-oxoglutarate-binding positions include arginine 313–serine 315, threonine 317, and arginine 319.

It belongs to the fto family. Monomer. May also exist as homodimer. Requires Fe(2+) as cofactor. In terms of tissue distribution, ubiquitous. Detected in brain, brain cortex, hypothalamus, cerebellum, liver, pancreas, heart, kidney, white adipose tissue and skeletal muscle. Most abundant in the brain, particularly in hypothalamic nuclei governing energy balance.

The protein resides in the nucleus. It is found in the nucleus speckle. The protein localises to the cytoplasm. The enzyme catalyses a 5'-end (N(7)-methyl 5'-triphosphoguanosine)-(N(6),2'-O-dimethyladenosine) in mRNA + 2-oxoglutarate + O2 = a 5'-end (N(7)-methyl 5'-triphosphoguanosine)-(2'-O-methyladenosine) in mRNA + formaldehyde + succinate + CO2. The catalysed reaction is an N(6)-methyladenosine in mRNA + 2-oxoglutarate + O2 = an adenosine in mRNA + formaldehyde + succinate + CO2. It catalyses the reaction N(6)-methyladenosine in U6 snRNA + 2-oxoglutarate + O2 = adenosine in U6 snRNA + formaldehyde + succinate + CO2. It carries out the reaction a 5'-end (N(7)-methyl 5'-triphosphoguanosine)-(N(6),2'-O-dimethyladenosine) in U6 snRNA + 2-oxoglutarate + O2 = a 5'-end (N(7)-methyl 5'-triphosphoguanosine)-(2'-O-methyladenosine) in U6 snRNA + formaldehyde + succinate + CO2. The enzyme catalyses an N(1)-methyladenosine in tRNA + 2-oxoglutarate + O2 = an adenosine in tRNA + formaldehyde + succinate + CO2. Its activity is regulated as follows. Activated by ascorbate. Inhibited by N-oxalylglycine, fumarate and succinate. Its function is as follows. RNA demethylase that mediates oxidative demethylation of different RNA species, such as mRNAs, tRNAs and snRNAs, and acts as a regulator of fat mass, adipogenesis and energy homeostasis. Specifically demethylates N(6)-methyladenosine (m6A) RNA, the most prevalent internal modification of messenger RNA (mRNA) in higher eukaryotes. M6A demethylation by FTO affects mRNA expression and stability. Also able to demethylate m6A in U6 small nuclear RNA (snRNA). Mediates demethylation of N(6),2'-O-dimethyladenosine cap (m6A(m)), by demethylating the N(6)-methyladenosine at the second transcribed position of mRNAs and U6 snRNA. Demethylation of m6A(m) in the 5'-cap by FTO affects mRNA stability by promoting susceptibility to decapping. Also acts as a tRNA demethylase by removing N(1)-methyladenine from various tRNAs. Has no activity towards 1-methylguanine. Has no detectable activity towards double-stranded DNA. Also able to repair alkylated DNA and RNA by oxidative demethylation: demethylates single-stranded RNA containing 3-methyluracil, single-stranded DNA containing 3-methylthymine and has low demethylase activity towards single-stranded DNA containing 1-methyladenine or 3-methylcytosine. Ability to repair alkylated DNA and RNA is however unsure in vivo. Involved in the regulation of fat mass, adipogenesis and body weight, thereby contributing to the regulation of body size and body fat accumulation. Involved in the regulation of thermogenesis and the control of adipocyte differentiation into brown or white fat cells. Regulates activity of the dopaminergic midbrain circuitry via its ability to demethylate m6A in mRNAs. This Mus musculus (Mouse) protein is Alpha-ketoglutarate-dependent dioxygenase FTO.